The chain runs to 653 residues: Fusexin 1 (653 aa).

Residues Met1–Ala23 form the signal peptide. Topologically, residues Ala24 to Gly559 are extracellular. 4 disulfide bridges follow: Cys126–Cys166, Cys397–Cys440, Cys467–Cys490, and Cys502–Cys519. A fusion loop region spans residues Asp154 to Gln159. Residues Ala560–Val580 traverse the membrane as a helical segment. Topologically, residues Gly581–Asp600 are cytoplasmic. The next 2 helical transmembrane spans lie at Ala601–Gln621 and Leu622–Leu642. Residues Tyr643–Leu653 lie on the Cytoplasmic side of the membrane.

Belongs to the HAP2/GCS1 family. Fusexin 1 subfamily. As to quaternary structure, homotrimer stabilized by interdomain contacts and numerous Ca(2+) and Na(+) ions.

Its subcellular location is the cell surface. It localises to the cell membrane. Its function is as follows. Exhibits fusogenic activity. Mediates cell-cell fusion in mammalian cells (bilateral fusion). The polypeptide is Fusexin 1 (Haloferax sp. (strain Q22)).